The following is a 71-amino-acid chain: MPQAEDKRQAAREVIDILHEISTLLNTNLDRTELSLCVSLIENGVNPDALAAVIADLRKETAPTSRHVLPE.

The protein belongs to the MOZART1 family. In terms of assembly, part of the gamma-tubulin complex.

The protein resides in the cytoplasm. The protein localises to the cytoskeleton. It is found in the microtubule organizing center. It localises to the spindle pole body. In terms of biological role, required for gamma-tubulin complex recruitment to the microtubule organizing center (MTOC). The chain is Mitotic-spindle organizing protein 1 from Aspergillus clavatus (strain ATCC 1007 / CBS 513.65 / DSM 816 / NCTC 3887 / NRRL 1 / QM 1276 / 107).